The sequence spans 480 residues: Ribulose bisphosphate carboxylase large chain (480 aa).

Residues 1–2 (MS) constitute a propeptide that is removed on maturation. Pro-3 is subject to N-acetylproline. At Lys-14 the chain carries N6,N6,N6-trimethyllysine. The substrate site is built by Asn-123 and Thr-173. Lys-175 serves as the catalytic Proton acceptor. Substrate is bound at residue Lys-177. Residues Lys-201, Asp-203, and Glu-204 each contribute to the Mg(2+) site. Lys-201 is subject to N6-carboxylysine. Catalysis depends on His-294, which acts as the Proton acceptor. The substrate site is built by Arg-295, His-327, and Ser-379.

This sequence belongs to the RuBisCO large chain family. Type I subfamily. As to quaternary structure, heterohexadecamer of 8 large chains and 8 small chains; disulfide-linked. The disulfide link is formed within the large subunit homodimers. Mg(2+) is required as a cofactor. Post-translationally, the disulfide bond which can form in the large chain dimeric partners within the hexadecamer appears to be associated with oxidative stress and protein turnover.

Its subcellular location is the plastid. The protein resides in the chloroplast. The catalysed reaction is 2 (2R)-3-phosphoglycerate + 2 H(+) = D-ribulose 1,5-bisphosphate + CO2 + H2O. It catalyses the reaction D-ribulose 1,5-bisphosphate + O2 = 2-phosphoglycolate + (2R)-3-phosphoglycerate + 2 H(+). RuBisCO catalyzes two reactions: the carboxylation of D-ribulose 1,5-bisphosphate, the primary event in carbon dioxide fixation, as well as the oxidative fragmentation of the pentose substrate in the photorespiration process. Both reactions occur simultaneously and in competition at the same active site. In Gossypium barbadense (Sea Island cotton), this protein is Ribulose bisphosphate carboxylase large chain.